A 535-amino-acid chain; its full sequence is Sodium channel protein Nach (535 aa).

The Cytoplasmic segment spans residues 1–49 (MGHQEELKPEQVDLKVTPFVGYLRRTWSDFCATSSIHGLKYTRDEDTNK). A helical transmembrane segment spans residues 50 to 70 (IVHLVWLLISVVMFICAVVMA). Residues 71 to 471 (RTFYMDYRSS…LVSNLGSAFS (401 aa)) are Extracellular-facing. Asn-165, Asn-239, and Asn-367 each carry an N-linked (GlcNAc...) asparagine glycan. Residues 472 to 492 (LFVGMSMLSVVEIIYYFSVIL) traverse the membrane as a helical segment. Residues 493-535 (RKNYKLECETRSQMLHKKPKFAWPKANDTHSKEQKSVFIIHKS) lie on the Cytoplasmic side of the membrane.

Belongs to the amiloride-sensitive sodium channel (TC 1.A.6) family. As to expression, embryonic and larval tracheal system; dorsal trunk (but not at fusion with transverse connective), several branches and terminal cells. Also expressed in adult tracheal system; dorsal trunk, but not at the spiracles.

It localises to the membrane. Its function is as follows. Part of a complex that plays a role in tracheal liquid clearance. Probable role in sodium transport. The polypeptide is Sodium channel protein Nach (Nach) (Drosophila melanogaster (Fruit fly)).